Reading from the N-terminus, the 699-residue chain is Ferric reduction oxidase 4 (699 aa).

At M1–K9 the chain is on the cytoplasmic side. A helical transmembrane segment spans residues T10–N29. At L30 to N54 the chain is on the lumenal side. Residues L55–L73 traverse the membrane as a helical segment. Residues H74–P101 lie on the Cytoplasmic side of the membrane. The helical transmembrane segment at L102 to Y125 threads the bilayer. Residues N126–K190 lie on the Lumenal side of the membrane. One can recognise a Ferric oxidoreductase domain in the interval G157–F275. Residues Y191–W214 traverse the membrane as a helical segment. Heme contacts are provided by H192 and H206. Residues A215 to Y264 are Cytoplasmic-facing. Residues T265–L289 traverse the membrane as a helical segment. Heme-binding residues include H266 and H279. Residues P290–R311 lie on the Lumenal side of the membrane. The FAD-binding FR-type domain occupies Q305 to D408. Residues L312–G332 traverse the membrane as a helical segment. The Cytoplasmic segment spans residues L333–N525. H354 to T357 contacts FAD. Position 400–403 (G400–G403) interacts with NAD(+). A helical membrane pass occupies residues F526–T548. The Lumenal segment spans residues R549 to R568. The helical transmembrane segment at G569–W590 threads the bilayer. Over R591 to W699 the chain is Cytoplasmic.

The protein belongs to the ferric reductase (FRE) family. The cofactor is FAD. Expressed in siliques. Detected at low levels in roots, cotyledon veins and shoots.

It localises to the membrane. The enzyme catalyses 2 a Fe(II)-siderophore + NAD(+) + H(+) = 2 a Fe(III)-siderophore + NADH. Its function is as follows. Ferric chelate reductase. May participate in the transport of electrons to a Fe(3+) ion via FAD and heme intermediates. May function as root surface cupric chelate reductase and participate in the reduction of Cu(2+), for Cu(+) acquisition via Cu(+) transporters in response to copper deficiency. The polypeptide is Ferric reduction oxidase 4 (FRO4) (Arabidopsis thaliana (Mouse-ear cress)).